Reading from the N-terminus, the 260-residue chain is tRNA pseudouridine synthase A (260 aa).

Asp51 acts as the Nucleophile in catalysis. Tyr109 provides a ligand contact to substrate.

This sequence belongs to the tRNA pseudouridine synthase TruA family. Homodimer.

It catalyses the reaction uridine(38/39/40) in tRNA = pseudouridine(38/39/40) in tRNA. Functionally, formation of pseudouridine at positions 38, 39 and 40 in the anticodon stem and loop of transfer RNAs. The sequence is that of tRNA pseudouridine synthase A from Albidiferax ferrireducens (strain ATCC BAA-621 / DSM 15236 / T118) (Rhodoferax ferrireducens).